Reading from the N-terminus, the 356-residue chain is Malate dehydrogenase, glyoxysomal (356 aa).

The N-terminal 36 residues, Met-1 to Cys-36, are a transit peptide targeting the glyoxysome. NAD(+) contacts are provided by residues Gly-51–Gly-57 and Asp-77. Substrate-binding residues include Arg-124 and Arg-130. NAD(+)-binding positions include Asn-137 and Ile-160–Asn-162. Substrate-binding residues include Asn-162 and Arg-196. The active-site Proton acceptor is His-220. Met-271 serves as a coordination point for NAD(+).

The protein belongs to the LDH/MDH superfamily. MDH type 1 family. In terms of assembly, homodimer.

The protein resides in the glyoxysome. It carries out the reaction (S)-malate + NAD(+) = oxaloacetate + NADH + H(+). The polypeptide is Malate dehydrogenase, glyoxysomal (Citrullus lanatus (Watermelon)).